An 89-amino-acid polypeptide reads, in one-letter code: MAKKSVVARNEKRKRLVEKYAAKREELLKAGDYEALRKLPRDSSASRVRNRCVLTGRGRGVYEKFGLCRHMFRKLALEGKLPGVKKASW.

It belongs to the universal ribosomal protein uS14 family. In terms of assembly, part of the 30S ribosomal subunit. Contacts proteins S3 and S10.

Binds 16S rRNA, required for the assembly of 30S particles and may also be responsible for determining the conformation of the 16S rRNA at the A site. The chain is Small ribosomal subunit protein uS14 from Chlorobium phaeovibrioides (strain DSM 265 / 1930) (Prosthecochloris vibrioformis (strain DSM 265)).